We begin with the raw amino-acid sequence, 174 residues long: Co-chaperone protein HscB (174 aa).

In terms of domain architecture, J spans 2–74; that stretch reads DYFTLFGLPA…LKRAEYMLSL (73 aa).

Belongs to the HscB family. Interacts with HscA and stimulates its ATPase activity. Interacts with IscU.

Its function is as follows. Co-chaperone involved in the maturation of iron-sulfur cluster-containing proteins. Seems to help targeting proteins to be folded toward HscA. The chain is Co-chaperone protein HscB from Yersinia pestis bv. Antiqua (strain Antiqua).